The sequence spans 120 residues: uncharacterized protein (120 aa).

Residues 4 to 120 (QIGTVAVYVE…EDGNVFLLKE (117 aa)) enclose the VOC domain.

This is an uncharacterized protein from Bacillus subtilis (strain 168).